Reading from the N-terminus, the 143-residue chain is Large ribosomal subunit protein uL11 (143 aa).

Belongs to the universal ribosomal protein uL11 family. As to quaternary structure, part of the ribosomal stalk of the 50S ribosomal subunit. Interacts with L10 and the large rRNA to form the base of the stalk. L10 forms an elongated spine to which L12 dimers bind in a sequential fashion forming a multimeric L10(L12)X complex. In terms of processing, one or more lysine residues are methylated.

In terms of biological role, forms part of the ribosomal stalk which helps the ribosome interact with GTP-bound translation factors. The protein is Large ribosomal subunit protein uL11 of Rhizorhabdus wittichii (strain DSM 6014 / CCUG 31198 / JCM 15750 / NBRC 105917 / EY 4224 / RW1) (Sphingomonas wittichii).